The following is a 357-amino-acid chain: GPI mannosyltransferase 2 (357 aa).

The next 8 helical transmembrane spans lie at 6 to 26 (TLIV…LVVP), 86 to 106 (AIAY…ALML), 128 to 148 (ILSP…FALL), 167 to 187 (VLGA…PFLF), 201 to 221 (GVSV…TQYL), 257 to 277 (YWTA…YLMY), 286 to 306 (LVPF…MWHV), and 334 to 354 (YVVR…GAYL).

Belongs to the PIGV family.

Its subcellular location is the endoplasmic reticulum membrane. It participates in glycolipid biosynthesis; glycosylphosphatidylinositol-anchor biosynthesis. In terms of biological role, mannosyltransferase involved in glycosylphosphatidylinositol-anchor biosynthesis. Transfers the second mannose to the glycosylphosphatidylinositol during GPI precursor assembly. In Yarrowia lipolytica (strain CLIB 122 / E 150) (Yeast), this protein is GPI mannosyltransferase 2 (GPI18).